A 191-amino-acid chain; its full sequence is Ribosomal RNA large subunit methyltransferase E (191 aa).

The S-adenosyl-L-methionine site is built by Gly-49, Trp-51, Asp-66, Asp-82, and Asp-105. Lys-145 serves as the catalytic Proton acceptor.

It belongs to the class I-like SAM-binding methyltransferase superfamily. RNA methyltransferase RlmE family.

The protein localises to the cytoplasm. The enzyme catalyses uridine(2552) in 23S rRNA + S-adenosyl-L-methionine = 2'-O-methyluridine(2552) in 23S rRNA + S-adenosyl-L-homocysteine + H(+). In terms of biological role, specifically methylates the uridine in position 2552 of 23S rRNA at the 2'-O position of the ribose in the fully assembled 50S ribosomal subunit. The sequence is that of Ribosomal RNA large subunit methyltransferase E from Archaeoglobus fulgidus (strain ATCC 49558 / DSM 4304 / JCM 9628 / NBRC 100126 / VC-16).